Reading from the N-terminus, the 430-residue chain is Glutamate-1-semialdehyde 2,1-aminomutase (430 aa).

Residue Lys267 is modified to N6-(pyridoxal phosphate)lysine.

The protein belongs to the class-III pyridoxal-phosphate-dependent aminotransferase family. HemL subfamily. Homodimer. Pyridoxal 5'-phosphate is required as a cofactor.

The protein resides in the cytoplasm. It catalyses the reaction (S)-4-amino-5-oxopentanoate = 5-aminolevulinate. It functions in the pathway porphyrin-containing compound metabolism; protoporphyrin-IX biosynthesis; 5-aminolevulinate from L-glutamyl-tRNA(Glu): step 2/2. The protein is Glutamate-1-semialdehyde 2,1-aminomutase of Thermomicrobium roseum (strain ATCC 27502 / DSM 5159 / P-2).